A 172-amino-acid polypeptide reads, in one-letter code: MEFKQHIKEVENWPKEGISFKDITSLMQNGPAYKQSVDALIDYARKQGADVIAGPEARGFVVGCPAAYAMEIGFVPVRKEGKLPRETVRVEYGLEYGKDVLTMHHDAIQPGQRVVILDDLLATGGTIEATIKMIEQLGGTVAGIGFLIELDGLGGREKLEGYDILSLIRYAD.

Belongs to the purine/pyrimidine phosphoribosyltransferase family. As to quaternary structure, homodimer.

Its subcellular location is the cytoplasm. It carries out the reaction AMP + diphosphate = 5-phospho-alpha-D-ribose 1-diphosphate + adenine. It functions in the pathway purine metabolism; AMP biosynthesis via salvage pathway; AMP from adenine: step 1/1. In terms of biological role, catalyzes a salvage reaction resulting in the formation of AMP, that is energically less costly than de novo synthesis. The sequence is that of Adenine phosphoribosyltransferase from Exiguobacterium sibiricum (strain DSM 17290 / CCUG 55495 / CIP 109462 / JCM 13490 / 255-15).